Consider the following 338-residue polypeptide: tRNA methyltransferase 10 homolog A (338 aa).

Disordered regions lie at residues 1–91 (MSSE…DRKR) and 296–338 (RVEG…SVPH). Serine 22 carries the phosphoserine modification. The stretch at 52 to 80 (KQWEEQRELRKQKRKEKRKRKQLERQCQP) forms a coiled coil. Over residues 61 to 73 (RKQKRKEKRKRKQ) the composition is skewed to basic residues. In terms of domain architecture, SAM-dependent MTase TRM10-type spans 88–279 (DRKRIRRDVV…TILPQRKGAV (192 aa)). A compositionally biased stretch (basic and acidic residues) spans 308–328 (EENRHELDSTHEEEKQDKENS). Positions 329–338 (TESTVNSVPH) are enriched in polar residues. A Phosphoserine modification is found at serine 335.

The protein belongs to the class IV-like SAM-binding methyltransferase superfamily. TRM10 family. In terms of assembly, interacts with tRNA.

It is found in the nucleus. It localises to the nucleolus. The catalysed reaction is guanosine(9) in tRNA + S-adenosyl-L-methionine = N(1)-methylguanosine(9) in tRNA + S-adenosyl-L-homocysteine + H(+). S-adenosyl-L-methionine-dependent guanine N(1)-methyltransferase that catalyzes the formation of N(1)-methylguanine at position 9 (m1G9) in tRNAs. Probably not able to catalyze formation of N(1)-methyladenine at position 9 (m1A9) in tRNAs. The sequence is that of tRNA methyltransferase 10 homolog A (TRMT10A) from Bos taurus (Bovine).